A 296-amino-acid chain; its full sequence is Acetyl-coenzyme A carboxylase carboxyl transferase subunit beta (296 aa).

The CoA carboxyltransferase N-terminal domain occupies 25–294; sequence VWTKCTACEQ…PFVEPELISE (270 aa). C29, C32, C48, and C51 together coordinate Zn(2+). Residues 29 to 51 form a C4-type zinc finger; it reads CTACEQVLYSEELKRNLYVCPKC.

The protein belongs to the AccD/PCCB family. In terms of assembly, acetyl-CoA carboxylase is a heterohexamer composed of biotin carboxyl carrier protein (AccB), biotin carboxylase (AccC) and two subunits each of ACCase subunit alpha (AccA) and ACCase subunit beta (AccD). The cofactor is Zn(2+).

The protein localises to the cytoplasm. The catalysed reaction is N(6)-carboxybiotinyl-L-lysyl-[protein] + acetyl-CoA = N(6)-biotinyl-L-lysyl-[protein] + malonyl-CoA. Its pathway is lipid metabolism; malonyl-CoA biosynthesis; malonyl-CoA from acetyl-CoA: step 1/1. Its function is as follows. Component of the acetyl coenzyme A carboxylase (ACC) complex. Biotin carboxylase (BC) catalyzes the carboxylation of biotin on its carrier protein (BCCP) and then the CO(2) group is transferred by the transcarboxylase to acetyl-CoA to form malonyl-CoA. The sequence is that of Acetyl-coenzyme A carboxylase carboxyl transferase subunit beta from Haemophilus influenzae (strain 86-028NP).